The primary structure comprises 444 residues: Alpha-1,3-mannosyl-glycoprotein 2-beta-N-acetylglucosaminyltransferase (444 aa).

Over 1–6 the chain is Cytoplasmic; the sequence is MARISC. Residues 7–24 traverse the membrane as a helical; Signal-anchor for type II membrane protein segment; sequence DLRFLLIPAAFMFIYIQM. Residues 25–444 are Lumenal-facing; sequence RLFQTQSQYA…SVMQLGIRNS (420 aa). Residues 61–92 are a coiled coil; it reads KQSRIVALEDMKNRQDEELVQLKDLIQTFEKK. Residues R115, D144, H188, and D210 each contribute to the substrate site. D211 contributes to the Mn(2+) binding site. D287 acts as the Proton acceptor in catalysis. S318 is a substrate binding site. Residue N351 is glycosylated (N-linked (GlcNAc...) asparagine).

Belongs to the glycosyltransferase 13 family. Mn(2+) serves as cofactor. Glycosylated. Expressed in roots, stems, leaves and flowers.

The protein resides in the golgi apparatus membrane. It catalyses the reaction N(4)-(alpha-D-Man-(1-&gt;3)-[alpha-D-Man-(1-&gt;3)-[alpha-D-Man-(1-&gt;6)]-alpha-D-Man-(1-&gt;6)]-beta-D-Man-(1-&gt;4)-beta-D-GlcNAc-(1-&gt;4)-beta-D-GlcNAc)-L-asparaginyl-[protein] (N-glucan mannose isomer 5A1,2) + UDP-N-acetyl-alpha-D-glucosamine = N(4)-{beta-D-GlcNAc-(1-&gt;2)-alpha-D-Man-(1-&gt;3)-[alpha-D-Man-(1-&gt;3)-[alpha-D-Man-(1-&gt;6)]-alpha-D-Man-(1-&gt;6)]-beta-D-Man-(1-&gt;4)-beta-D-GlcNAc-(1-&gt;4)-beta-D-GlcNAc}-L-asparaginyl-[protein] + UDP + H(+). It participates in protein modification; protein glycosylation. Initiates complex N-linked carbohydrate formation. Essential for the conversion of high-mannose to hybrid and complex N-glycans. Required for normal root growth and morphology. This Arabidopsis thaliana (Mouse-ear cress) protein is Alpha-1,3-mannosyl-glycoprotein 2-beta-N-acetylglucosaminyltransferase.